A 186-amino-acid chain; its full sequence is Myosin light chain 1, skeletal muscle isoform (186 aa).

A Blocked amino end (Met) modification is found at Met1. Residues 1–26 (MPKAPAKKAEPAPAPAPAPEPAPAPA) form a disordered region. Pro residues predominate over residues 12–26 (APAPAPAPEPAPAPA). 2 consecutive EF-hand domains span residues 42-77 (DQIE…LGQN) and 119-154 (AGFE…LGEK).

In terms of assembly, myosin is a hexamer of 2 heavy chains and 4 light chains.

The protein is Myosin light chain 1, skeletal muscle isoform of Chelon ramada (Thin-lipped grey mullet).